A 222-amino-acid polypeptide reads, in one-letter code: Large ribosomal subunit protein uL1 (222 aa).

This sequence belongs to the universal ribosomal protein uL1 family. As to quaternary structure, part of the 50S ribosomal subunit.

Its function is as follows. Binds directly to 23S rRNA. Probably involved in E site tRNA release. In terms of biological role, protein L1 is also a translational repressor protein, it controls the translation of its operon by binding to its mRNA. In Pyrobaculum calidifontis (strain DSM 21063 / JCM 11548 / VA1), this protein is Large ribosomal subunit protein uL1.